Reading from the N-terminus, the 154-residue chain is Myoglobin (154 aa).

Residues Gly-2–Lys-148 enclose the Globin domain. At Ser-4 the chain carries Phosphoserine. His-65 lines the nitrite pocket. O2 is bound at residue His-65. Phosphothreonine is present on Thr-68. His-94 is a binding site for heme b.

The protein belongs to the globin family. In terms of assembly, monomeric.

Its subcellular location is the cytoplasm. The protein localises to the sarcoplasm. The enzyme catalyses Fe(III)-heme b-[protein] + nitric oxide + H2O = Fe(II)-heme b-[protein] + nitrite + 2 H(+). It carries out the reaction H2O2 + AH2 = A + 2 H2O. Functionally, monomeric heme protein which primary function is to store oxygen and facilitate its diffusion within muscle tissues. Reversibly binds oxygen through a pentacoordinated heme iron and enables its timely and efficient release as needed during periods of heightened demand. Depending on the oxidative conditions of tissues and cells, and in addition to its ability to bind oxygen, it also has a nitrite reductase activity whereby it regulates the production of bioactive nitric oxide. Under stress conditions, like hypoxia and anoxia, it also protects cells against reactive oxygen species thanks to its pseudoperoxidase activity. The chain is Myoglobin (MB) from Orycteropus afer (Aardvark).